A 94-amino-acid polypeptide reads, in one-letter code: Small ribosomal subunit protein uS19 (94 aa).

It belongs to the universal ribosomal protein uS19 family.

Functionally, protein S19 forms a complex with S13 that binds strongly to the 16S ribosomal RNA. This Hamiltonella defensa subsp. Acyrthosiphon pisum (strain 5AT) protein is Small ribosomal subunit protein uS19.